A 214-amino-acid polypeptide reads, in one-letter code: Probable chemoreceptor glutamine deamidase CheD (214 aa).

Belongs to the CheD family.

The enzyme catalyses L-glutaminyl-[protein] + H2O = L-glutamyl-[protein] + NH4(+). Its function is as follows. Probably deamidates glutamine residues to glutamate on methyl-accepting chemotaxis receptors (MCPs), playing an important role in chemotaxis. In Vibrio vulnificus (strain YJ016), this protein is Probable chemoreceptor glutamine deamidase CheD.